A 218-amino-acid chain; its full sequence is Embryonic polyadenylate-binding protein 2-B (218 aa).

Disordered stretches follow at residues 1–24 (MSERVSEEPGLDKGDRAEECELDD) and 169–218 (RTNM…NNPY). The RRM domain maps to 93 to 170 (RSVYVGNVDY…RTIKVLPKRT (78 aa)). The segment covering 198–209 (QRPRGRPFRGRG) has biased composition (basic residues).

In terms of assembly, homodimer; Upon poly(A) binding, undergoes a dimer-monomer transition that removes the polyproline motif from the RNA recognition site and allows it to be replaced by the adenosine nucleotides of poly(A).

Its subcellular location is the cytoplasm. Binds the poly(A) tail of mRNA. Unable to interact with the cap-binding complex and is therefore unlikely to be involved in translation initiation. The polypeptide is Embryonic polyadenylate-binding protein 2-B (Pabpn1l-b) (Xenopus laevis (African clawed frog)).